Consider the following 802-residue polypeptide: Epithelial sodium channel subunit delta (802 aa).

Topologically, residues 1–250 (MRAVLSQKTT…CSRGNRLKTT (250 aa)) are cytoplasmic. Residues 145-211 (KQPHGGALTS…PPPPKEGHQE (67 aa)) form a disordered region. The span at 166 to 176 (CHLKGWQHRPT) shows a compositional bias: basic residues. The segment covering 192–205 (PPRPGPPSAPPPPP) has biased composition (pro residues). Residues 251–271 (SWGLLSLGALVALCWQLGLLF) traverse the membrane as a helical segment. Residues 272-694 (ERHWHRPVLM…VPQLLSAMGS (423 aa)) are Extracellular-facing. N-linked (GlcNAc...) asparagine glycans are attached at residues asparagine 330 and asparagine 548. Residues 695 to 715 (LCSLWFGASVLSLLELLELLL) traverse the membrane as a helical segment. The Cytoplasmic portion of the chain corresponds to 716 to 802 (DASALTLVLG…GPQPLETLDT (87 aa)). Residues 738-777 (RASPASGASSIKPEASQMPPPAGGTSDDPEPSGPHLPRVM) form a disordered region.

This sequence belongs to the amiloride-sensitive sodium channel (TC 1.A.6) family. SCNN1D subfamily. Can form an alternative heterotrimeric epithelial sodium channel (ENaC), composed of a delta (SCNN1D), beta (SCNN1B), and gamma (SCNN1G) subunit, where the delta (SCNN1D) subunit replaces the alpha (SCNN1A) subunit. Not specifically expressed in epithelial cells.

It is found in the apical cell membrane. It catalyses the reaction Na(+)(in) = Na(+)(out). With respect to regulation, originally identified and characterized by its inhibition by the diuretic drug amiloride. In terms of biological role, potential alternative pore-forming subunit of the epithelial sodium channel (ENaC), capable of replacing the alpha/SCNN1A subunit, creating a more active channel with distinct properties. ENaC functions in epithelial tissues, where it facilitates the electrodiffusion of sodium ions from the extracellular fluid through the apical membrane of cells, with water following osmotically, regulating sodium balance and fluid homeostasis. This subunit could also function independently as a sodium channel or assemble into other tissue-specific heterotrimeric sodium channels. ENaC channels including this isoform exhibit greater conductance. This is Epithelial sodium channel subunit delta from Homo sapiens (Human).